We begin with the raw amino-acid sequence, 433 residues long: C2H2 type master regulator of conidiophore development brlA (433 aa).

Disordered regions lie at residues P23–S54 and T238–G268. The span at T30 to S48 shows a compositional bias: low complexity. Residues T238–S264 are compositionally biased toward polar residues. 2 consecutive C2H2-type zinc fingers follow at residues F321–H345 and H351–H376. The tract at residues E391–C423 is disordered.

It localises to the nucleus. In terms of biological role, brlA, abaA and wetA are pivotal regulators of conidiophore development and conidium maturation. They act individually and together to regulate their own expression and that of numerous other sporulation-specific genes. Binds promoters of target genes at brlA response elements (BREs) containing the conserved sequence 5'-(C/A)(A/G)AGGG(G/A)-3'. The protein is C2H2 type master regulator of conidiophore development brlA of Penicillium camemberti (strain FM 013).